Consider the following 185-residue polypeptide: ATP synthase subunit b 2 (185 aa).

The disordered stretch occupies residues 1 to 26; the sequence is MAQGHGDAKGTTAHTEAGGGHKAPFP. A helical transmembrane segment spans residues 37–57; it reads LVSLAIAFVALYLIVSKIALP.

Belongs to the ATPase B chain family. F-type ATPases have 2 components, F(1) - the catalytic core - and F(0) - the membrane proton channel. F(1) has five subunits: alpha(3), beta(3), gamma(1), delta(1), epsilon(1). F(0) has three main subunits: a(1), b(2) and c(10-14). The alpha and beta chains form an alternating ring which encloses part of the gamma chain. F(1) is attached to F(0) by a central stalk formed by the gamma and epsilon chains, while a peripheral stalk is formed by the delta and b chains.

The protein resides in the cell inner membrane. Its function is as follows. F(1)F(0) ATP synthase produces ATP from ADP in the presence of a proton or sodium gradient. F-type ATPases consist of two structural domains, F(1) containing the extramembraneous catalytic core and F(0) containing the membrane proton channel, linked together by a central stalk and a peripheral stalk. During catalysis, ATP synthesis in the catalytic domain of F(1) is coupled via a rotary mechanism of the central stalk subunits to proton translocation. Functionally, component of the F(0) channel, it forms part of the peripheral stalk, linking F(1) to F(0). The b'-subunit is a diverged and duplicated form of b found in plants and photosynthetic bacteria. This is ATP synthase subunit b 2 (atpF2) from Rhodopseudomonas palustris (strain ATCC BAA-98 / CGA009).